The primary structure comprises 750 residues: Catalase-peroxidase (750 aa).

A cross-link (tryptophyl-tyrosyl-methioninium (Trp-Tyr) (with M-261)) is located at residues 112–235 (WHSAGTYRIG…LGAAHMGLIY (124 aa)). H113 (proton acceptor) is an active-site residue. Positions 235–261 (YVNPEGHNGNPDPVEAASYIRETFGRM) form a cross-link, tryptophyl-tyrosyl-methioninium (Tyr-Met) (with W-112). A heme b-binding site is contributed by H276.

This sequence belongs to the peroxidase family. Peroxidase/catalase subfamily. As to quaternary structure, homodimer or homotetramer. Heme b is required as a cofactor. Post-translationally, formation of the three residue Trp-Tyr-Met cross-link is important for the catalase, but not the peroxidase activity of the enzyme.

The catalysed reaction is H2O2 + AH2 = A + 2 H2O. It carries out the reaction 2 H2O2 = O2 + 2 H2O. Its function is as follows. Bifunctional enzyme with both catalase and broad-spectrum peroxidase activity. This chain is Catalase-peroxidase, found in Christiangramia forsetii (strain DSM 17595 / CGMCC 1.15422 / KT0803) (Gramella forsetii).